A 291-amino-acid polypeptide reads, in one-letter code: G1/S-specific cyclin-D2 (291 aa).

The interval 264–291 (QQQQSNPSKTIEELDQASTPTDVRDINL) is disordered. At Thr282 the chain carries Phosphothreonine.

It belongs to the cyclin family. Cyclin D subfamily. As to quaternary structure, interacts with the CDK4 and CDK6 protein kinases to form a serine/threonine kinase holoenzyme complex. The cyclin subunit imparts substrate specificity to the complex. Post-translationally, phosphorylation at Thr-282 by MAP kinases is required for ubiquitination and degradation by the DCX(AMBRA1) complex. Ubiquitinated by the DCX(AMBRA1) complex during the transition from G1 to S cell phase, leading to its degradation: ubiquitination is dependent on Thr-282 phosphorylation. The DCX(AMBRA1) complex represents the major regulator of CCND2 stability during the G1/S transition.

It localises to the nucleus. The protein localises to the cytoplasm. It is found in the nucleus membrane. Its function is as follows. Regulatory component of the cyclin D2-CDK4 (DC) complex that phosphorylates and inhibits members of the retinoblastoma (RB) protein family including RB1 and regulates the cell-cycle during G(1)/S transition. Phosphorylation of RB1 allows dissociation of the transcription factor E2F from the RB/E2F complex and the subsequent transcription of E2F target genes which are responsible for the progression through the G(1) phase. Hypophosphorylates RB1 in early G(1) phase. Cyclin D-CDK4 complexes are major integrators of various mitogenenic and antimitogenic signals. This is G1/S-specific cyclin-D2 (CCND2) from Gallus gallus (Chicken).